The following is a 307-amino-acid chain: Glutaminase (307 aa).

Substrate is bound by residues Ser-66, Asn-117, Glu-161, Asn-168, Tyr-192, Tyr-243, and Val-261.

Belongs to the glutaminase family. In terms of assembly, homotetramer.

It carries out the reaction L-glutamine + H2O = L-glutamate + NH4(+). This chain is Glutaminase, found in Serratia proteamaculans (strain 568).